The primary structure comprises 208 residues: MASVGLQLLATVLAIIGWLGEIVICALPMWKVTAFIGNNIVTAQIFWEGLWMNCVQQSTGQMQCKVYDSMLALPQDLQAARALVVISIIVTFMGVFLTIAGGKCTNCIEDQDAKAKVVVAAGVFFLVGGILCLIPVCWSANSVIKDFYNPTLSDAQKRELGASLFIGWCASGLLLLGGALLCCQCPKNEGRAYSVKYSAPRSAPGAYV.

A run of 4 helical transmembrane segments spans residues 8 to 28 (LLAT…CALP), 82 to 102 (ALVV…IAGG), 117 to 137 (VVVA…IPVC), and 160 to 180 (LGAS…GGAL).

Belongs to the claudin family.

The protein localises to the cell membrane. It is found in the cell junction. The protein resides in the tight junction. In terms of biological role, component of tight junction (TJ) strands. The protein is Claudin-like protein ZF-A89 (cldnd) of Danio rerio (Zebrafish).